The primary structure comprises 462 residues: tRNA modification GTPase MnmE (462 aa).

R34, E92, and K131 together coordinate (6S)-5-formyl-5,6,7,8-tetrahydrofolate. Positions 227-386 constitute a TrmE-type G domain; sequence GLQVVIAGKP…LIDAITAHAG (160 aa). N237 contributes to the K(+) binding site. Residues 237–242, 256–262, and 281–284 each bind GTP; these read NAGKSS, TDIAGTT, and DTAG. A Mg(2+)-binding site is contributed by S241. The K(+) site is built by T256, I258, and T261. Residue T262 coordinates Mg(2+). Position 462 (K462) interacts with (6S)-5-formyl-5,6,7,8-tetrahydrofolate.

Belongs to the TRAFAC class TrmE-Era-EngA-EngB-Septin-like GTPase superfamily. TrmE GTPase family. As to quaternary structure, homodimer. Heterotetramer of two MnmE and two MnmG subunits. The cofactor is K(+).

It is found in the cytoplasm. Its function is as follows. Exhibits a very high intrinsic GTPase hydrolysis rate. Involved in the addition of a carboxymethylaminomethyl (cmnm) group at the wobble position (U34) of certain tRNAs, forming tRNA-cmnm(5)s(2)U34. The polypeptide is tRNA modification GTPase MnmE (Acinetobacter baylyi (strain ATCC 33305 / BD413 / ADP1)).